Reading from the N-terminus, the 433-residue chain is Glutamate-1-semialdehyde 2,1-aminomutase (433 aa).

Lys273 carries the N6-(pyridoxal phosphate)lysine modification.

Belongs to the class-III pyridoxal-phosphate-dependent aminotransferase family. HemL subfamily. As to quaternary structure, homodimer. It depends on pyridoxal 5'-phosphate as a cofactor.

It is found in the cytoplasm. The catalysed reaction is (S)-4-amino-5-oxopentanoate = 5-aminolevulinate. It functions in the pathway porphyrin-containing compound metabolism; protoporphyrin-IX biosynthesis; 5-aminolevulinate from L-glutamyl-tRNA(Glu): step 2/2. This is Glutamate-1-semialdehyde 2,1-aminomutase from Ralstonia nicotianae (strain ATCC BAA-1114 / GMI1000) (Ralstonia solanacearum).